The primary structure comprises 24 residues: M-poneritoxin-Ng2b (24 aa).

Leucine 24 carries the post-translational modification Leucine amide.

Expressed by the venom gland.

The protein localises to the secreted. Functionally, has a broad spectrum of activity against both Gram-positive and Gram-negative bacteria. Is inactive against yeast, erythrocytes, and insects. The polypeptide is M-poneritoxin-Ng2b (Neoponera goeldii (Ponerine ant)).